Reading from the N-terminus, the 298-residue chain is Ribosomal protein L11 methyltransferase (298 aa).

Thr148, Gly169, Asp191, and Asn233 together coordinate S-adenosyl-L-methionine.

This sequence belongs to the methyltransferase superfamily. PrmA family.

It localises to the cytoplasm. The catalysed reaction is L-lysyl-[protein] + 3 S-adenosyl-L-methionine = N(6),N(6),N(6)-trimethyl-L-lysyl-[protein] + 3 S-adenosyl-L-homocysteine + 3 H(+). Its function is as follows. Methylates ribosomal protein L11. This Marinobacter nauticus (strain ATCC 700491 / DSM 11845 / VT8) (Marinobacter aquaeolei) protein is Ribosomal protein L11 methyltransferase.